We begin with the raw amino-acid sequence, 90 residues long: Probable Fe(2+)-trafficking protein (90 aa).

Belongs to the Fe(2+)-trafficking protein family.

Functionally, could be a mediator in iron transactions between iron acquisition and iron-requiring processes, such as synthesis and/or repair of Fe-S clusters in biosynthetic enzymes. The sequence is that of Probable Fe(2+)-trafficking protein from Cupriavidus pinatubonensis (strain JMP 134 / LMG 1197) (Cupriavidus necator (strain JMP 134)).